A 340-amino-acid chain; its full sequence is Tartrate-resistant acid phosphatase type 5 (340 aa).

The N-terminal stretch at 1–20 (MDTWTVLLILQASLVLPGAV) is a signal peptide. The Fe cation site is built by Asp-41, Asp-79, Tyr-82, and Asn-118. Residues Asn-124 and Asn-155 are each glycosylated (N-linked (GlcNAc...) asparagine). A disulfide bridge connects residues Cys-169 and Cys-227. Fe cation is bound by residues His-213, His-248, and His-250.

Requires Fe cation as cofactor.

The protein resides in the secreted. The enzyme catalyses a phosphate monoester + H2O = an alcohol + phosphate. Functionally, uteroferrin is a phosphoprotein phosphatase, synthesized in response to progesterone. It appears to function in transplacental transport of iron in pig. This is Tartrate-resistant acid phosphatase type 5 (ACP5) from Sus scrofa (Pig).